A 662-amino-acid polypeptide reads, in one-letter code: Probable actin-related protein 8 (662 aa).

2 stretches are compositionally biased toward basic and acidic residues: residues 50-59 (AGEKDAKETE) and 67-77 (TKQDDSKKSQV). The disordered stretch occupies residues 50–92 (AGEKDAKETESESANGDTKQDDSKKSQVEEEEDGIEESELGEE). The span at 78-89 (EEEEDGIEESEL) shows a compositional bias: acidic residues. 339–342 (DMGA) is an ATP binding site.

The protein belongs to the actin family. Component of the chromatin remodeling Ino80 complex. Exists as monomers and dimers, but the dimer is most probably the biologically relevant form required for stable interactions with histones that exploits the twofold symmetry of the nucleosome core.

The protein localises to the nucleus. Functionally, probably involved in transcription regulation via its interaction with the INO80 complex, a chromatin remodeling complex. Exhibits low basal ATPase activity, and unable to polymerize. Strongly prefer nucleosomes and H3-H4 tetramers over H2A-H2B dimers, suggesting it may act as a nucleosome recognition module within the complex. This Schizosaccharomyces pombe (strain 972 / ATCC 24843) (Fission yeast) protein is Probable actin-related protein 8.